A 108-amino-acid chain; its full sequence is Large ribosomal subunit protein uL24 (108 aa).

It belongs to the universal ribosomal protein uL24 family. As to quaternary structure, part of the 50S ribosomal subunit.

Its function is as follows. One of two assembly initiator proteins, it binds directly to the 5'-end of the 23S rRNA, where it nucleates assembly of the 50S subunit. Functionally, one of the proteins that surrounds the polypeptide exit tunnel on the outside of the subunit. This is Large ribosomal subunit protein uL24 from Citrifermentans bemidjiense (strain ATCC BAA-1014 / DSM 16622 / JCM 12645 / Bem) (Geobacter bemidjiensis).